We begin with the raw amino-acid sequence, 196 residues long: Phosphoheptose isomerase (196 aa).

An SIS domain is found at 33–192 (LIQSLKNGGK…ESECGENGNT (160 aa)). 48-50 (NGG) contacts substrate. His57 and Glu61 together coordinate Zn(2+). Residues Glu61, 90–91 (ND), 116–118 (STS), Ser121, and Gln168 contribute to the substrate site. Residues Gln168 and His176 each contribute to the Zn(2+) site.

Belongs to the SIS family. GmhA subfamily. As to quaternary structure, homotetramer. The cofactor is Zn(2+).

The protein resides in the cytoplasm. The enzyme catalyses 2 D-sedoheptulose 7-phosphate = D-glycero-alpha-D-manno-heptose 7-phosphate + D-glycero-beta-D-manno-heptose 7-phosphate. Its pathway is carbohydrate biosynthesis; D-glycero-D-manno-heptose 7-phosphate biosynthesis; D-glycero-alpha-D-manno-heptose 7-phosphate and D-glycero-beta-D-manno-heptose 7-phosphate from sedoheptulose 7-phosphate: step 1/1. In terms of biological role, catalyzes the isomerization of sedoheptulose 7-phosphate in D-glycero-D-manno-heptose 7-phosphate. In Helicobacter hepaticus (strain ATCC 51449 / 3B1), this protein is Phosphoheptose isomerase.